The sequence spans 61 residues: Large ribosomal subunit protein uL30 (61 aa).

It belongs to the universal ribosomal protein uL30 family. In terms of assembly, part of the 50S ribosomal subunit.

In Petrotoga mobilis (strain DSM 10674 / SJ95), this protein is Large ribosomal subunit protein uL30.